The primary structure comprises 801 residues: Mitochondrial intermediate peptidase (801 aa).

The transit peptide at 1–41 (MKDQLLVPLRRRPWTCQKCLQRLQLPRHQTRRSFETAASPF) directs the protein to the mitochondrion. His-564 provides a ligand contact to Zn(2+). Residue Glu-565 is part of the active site. Residues His-568 and His-571 each contribute to the Zn(2+) site.

Belongs to the peptidase M3 family. The cofactor is Zn(2+).

It is found in the mitochondrion matrix. It carries out the reaction Release of an N-terminal octapeptide as second stage of processing of some proteins imported into the mitochondrion.. Its function is as follows. Cleaves proteins, imported into the mitochondrion, to their mature size. While most mitochondrial precursor proteins are processed to the mature form in one step by mitochondrial processing peptidase (MPP), the sequential cleavage by MIP of an octapeptide after initial processing by MPP is a required step for a subgroup of nuclear-encoded precursor proteins destined for the matrix or the inner membrane. This Aspergillus fumigatus (strain CBS 144.89 / FGSC A1163 / CEA10) (Neosartorya fumigata) protein is Mitochondrial intermediate peptidase (oct1).